A 256-amino-acid chain; its full sequence is MKLTRKMVLTRAKASELHSVRKLNCWGSRLTDISICQEMPSLEVITLSVNSISTLEPVSRCQRLSELYLRRNRIPSLAELFYLKGLPRLRVLWLAENPCCGTSPHRYRMTVLRTLPRLQKLDNQAVTEEELSRALSEGEEITAAPEREGTGHGGPKLCCTLSSLSSAAETGRDPLDSEEEATSGAQDERGLKPPSRGQFPSLSARDASSSHRGRNVLTAILLLLRELDAEGLEAVQQTVGSRLQALRGEEVQEHAE.

LRR repeat units follow at residues 19–40 (SVRK…QEMP), 41–62 (SLEV…SRCQ), and 63–84 (RLSE…FYLK). The LRRCT domain maps to 97-137 (NPCCGTSPHRYRMTVLRTLPRLQKLDNQAVTEEELSRALSE). Disordered stretches follow at residues 129–156 (EELS…GGPK) and 168–212 (AETG…SSHR). Phosphoserine occurs at positions 136 and 177.

As to quaternary structure, found in a complex with CFAP410, NEK1 and SPATA7. Interacts with NEK1. As to expression, widely expressed. Expressed in the retina.

It is found in the mitochondrion. It localises to the cytoplasm. The protein resides in the cytoskeleton. The protein localises to the cilium basal body. Its subcellular location is the cell projection. It is found in the cilium. It localises to the photoreceptor outer segment. In terms of biological role, plays a role in cilia formation and/or maintenance. Plays a role in the regulation of cell morphology and cytoskeletal organization. Involved in DNA damage repair. This is Cilia- and flagella-associated protein 410 from Homo sapiens (Human).